Here is a 908-residue protein sequence, read N- to C-terminus: Protein translocase subunit SecA (908 aa).

ATP-binding positions include glutamine 87, 105 to 109, and aspartate 494; that span reads GEGKT. The interval 871 to 908 is disordered; that stretch reads QEFSGGNLNRSQSNGSSVTVTTSSGGGTERKTSRRRKR. Over residues 874–884 the composition is skewed to polar residues; the sequence is SGGNLNRSQSN.

Belongs to the SecA family. As to quaternary structure, monomer and homodimer. Part of the essential Sec protein translocation apparatus which comprises SecA, SecYEG and auxiliary proteins SecDF. Other proteins may also be involved.

The protein localises to the cell inner membrane. It localises to the cytoplasm. It catalyses the reaction ATP + H2O + cellular proteinSide 1 = ADP + phosphate + cellular proteinSide 2.. Functionally, part of the Sec protein translocase complex. Interacts with the SecYEG preprotein conducting channel. Has a central role in coupling the hydrolysis of ATP to the transfer of proteins into and across the cell membrane, serving as an ATP-driven molecular motor driving the stepwise translocation of polypeptide chains across the membrane. The chain is Protein translocase subunit SecA from Leptospira interrogans serogroup Icterohaemorrhagiae serovar Lai (strain 56601).